Consider the following 192-residue polypeptide: Large ribosomal subunit protein bL9 (192 aa).

Positions 172–192 (DALRPEDFFDPEADGIDEDEA) are disordered. Positions 179–192 (FFDPEADGIDEDEA) are enriched in acidic residues.

The protein belongs to the bacterial ribosomal protein bL9 family.

Its function is as follows. Binds to the 23S rRNA. The sequence is that of Large ribosomal subunit protein bL9 from Rhizobium etli (strain CIAT 652).